We begin with the raw amino-acid sequence, 510 residues long: Laccase (510 aa).

Plastocyanin-like domains lie at 45–79 (PTKLWTYNGSLPGPTIKANRNEKVKVKWMNKLPLK), 99–174 (KTVV…LISD), 242–317 (YLEV…IVLK), and 372–506 (LTLT…MRPM). The Cu cation site is built by His-103, His-105, His-151, and His-153. Cu cation-binding residues include His-419, His-422, His-424, His-491, Cys-492, His-493, His-497, and Met-502.

This sequence belongs to the multicopper oxidase family. Requires Cu(2+) as cofactor.

It catalyses the reaction 4 hydroquinone + O2 = 4 benzosemiquinone + 2 H2O. Its activity is regulated as follows. Resistant to alkali and organic solvents such as methanol, ethanol and acetone. Resistant to EDTA, which might be explained by the spatial protection of copper ions in the active sites. Inhibited by DMSO. Strongly inhibited by Fe(2+) and DTT. Its function is as follows. Multicopper oxidase that catalyzes the oxidation of a variety of substrates, including phenolic and non-phenolic compounds. Substrates include 2,6-dimethoxyphenol (2,6-DMP) and the non-phenolic compound 2,2'-azino-bis(3-ethylbenzothiazoline-6-sulfonic acid) (ABTS). Cannot use guaiacol and catechol. In Bacillus stratosphericus, this protein is Laccase.